Here is a 652-residue protein sequence, read N- to C-terminus: DNA ligase (652 aa).

NAD(+) contacts are provided by residues 29–33 (DSEYD), 78–79 (SL), and glutamate 107. Catalysis depends on lysine 109, which acts as the N6-AMP-lysine intermediate. NAD(+) contacts are provided by arginine 130, glutamate 164, lysine 278, and lysine 302. Cysteine 395, cysteine 398, cysteine 413, and cysteine 418 together coordinate Zn(2+). One can recognise a BRCT domain in the interval 577–652 (VADAALSGLT…VRDEAWLESL (76 aa)).

The protein belongs to the NAD-dependent DNA ligase family. LigA subfamily. Requires Mg(2+) as cofactor. It depends on Mn(2+) as a cofactor.

The enzyme catalyses NAD(+) + (deoxyribonucleotide)n-3'-hydroxyl + 5'-phospho-(deoxyribonucleotide)m = (deoxyribonucleotide)n+m + AMP + beta-nicotinamide D-nucleotide.. In terms of biological role, DNA ligase that catalyzes the formation of phosphodiester linkages between 5'-phosphoryl and 3'-hydroxyl groups in double-stranded DNA using NAD as a coenzyme and as the energy source for the reaction. It is essential for DNA replication and repair of damaged DNA. This is DNA ligase from Streptococcus pneumoniae (strain Hungary19A-6).